A 376-amino-acid polypeptide reads, in one-letter code: Spermidine/putrescine import ATP-binding protein PotA (376 aa).

Residues Ile-6 to Leu-236 enclose the ABC transporter domain. Gly-38–Thr-45 lines the ATP pocket.

It belongs to the ABC transporter superfamily. Spermidine/putrescine importer (TC 3.A.1.11.1) family. As to quaternary structure, the complex is composed of two ATP-binding proteins (PotA), two transmembrane proteins (PotB and PotC) and a solute-binding protein (PotD).

Its subcellular location is the cell inner membrane. It carries out the reaction ATP + H2O + polyamine-[polyamine-binding protein]Side 1 = ADP + phosphate + polyamineSide 2 + [polyamine-binding protein]Side 1.. Part of the ABC transporter complex PotABCD involved in spermidine/putrescine import. Responsible for energy coupling to the transport system. The polypeptide is Spermidine/putrescine import ATP-binding protein PotA (Fusobacterium nucleatum subsp. nucleatum (strain ATCC 25586 / DSM 15643 / BCRC 10681 / CIP 101130 / JCM 8532 / KCTC 2640 / LMG 13131 / VPI 4355)).